The chain runs to 307 residues: Dihydroorotate dehydrogenase B (NAD(+)), catalytic subunit (307 aa).

FMN contacts are provided by residues serine 22 and 46–47; that span reads KA. Residues lysine 46 and 70 to 74 contribute to the substrate site; that span reads NAIGL. 2 residues coordinate FMN: asparagine 102 and asparagine 130. Asparagine 130 is a binding site for substrate. Residue cysteine 133 is the Nucleophile of the active site. FMN-binding residues include lysine 168 and isoleucine 194. 195–196 serves as a coordination point for substrate; it reads NT. FMN contacts are provided by residues glycine 220, 246-247, and 268-269; these read GG and GT.

It belongs to the dihydroorotate dehydrogenase family. Type 1 subfamily. Heterotetramer of 2 PyrK and 2 PyrD type B subunits. FMN serves as cofactor.

The protein resides in the cytoplasm. It catalyses the reaction (S)-dihydroorotate + NAD(+) = orotate + NADH + H(+). The protein operates within pyrimidine metabolism; UMP biosynthesis via de novo pathway; orotate from (S)-dihydroorotate (NAD(+) route): step 1/1. Catalyzes the conversion of dihydroorotate to orotate with NAD(+) as electron acceptor. This is Dihydroorotate dehydrogenase B (NAD(+)), catalytic subunit (pyrD) from Latilactobacillus sakei subsp. sakei (strain 23K) (Lactobacillus sakei subsp. sakei).